The chain runs to 562 residues: MLNKDQFADNHFIRTIIEDDLKSGKHEAVQTRFPPEPNGYLHIGHAKSICLNFGLAYIYDGLCNLRFDDTNPEKENDEYVNAIKEDVEWLGFHWAGEPRFASDYFDRLYDYAVGLIKDGKAYVDDLTPEEMREYRGTLTEAGKNSPYRDRSIEENLDLFTRMKNGEFPDGSKTLRLKIDMAAGNINMRDPVIYRIRRAHHHNTGDKWCIYPMYDYTHCISDAIEGITHSLCTLEFEAHRPLYDWVLDNIPALHATRPRQYEFSRLELLYTITSKRKLNQLVVEKHVSGWDDPRMPTISGMRRRGYTPEGVRLFAKRAGISKSENIVDMSVLEGAIREELENSAPRLMAVLNPLKVTLTNFQAGKTQSRRAAFHPNHEEMGDREVPVSQTIYIEADDFAENPPKGFKRLIPGGEVRLRHGYVIKCGEVVKDEAGNVVELKCSIDHDTLGKNPEGRKVKGVIHWVSAEHAAEIKVRLYDRLFTVERPGAVRGEDGEYLPFTDFLNPESVKEITAYAEPAAKDLPAESRWQFERIGYFVTDRQDHGKDTPVFNRTVTLKDSWQPK.

The 'HIGH' region motif lies at 35-45; sequence PEPNGYLHIGH. ATP contacts are provided by residues 36 to 38 and 42 to 48; these read EPN and HIGHAKS. Positions 68 and 213 each coordinate L-glutamine. ATP contacts are provided by residues Thr-232 and 264–265; that span reads RL. Residues 271 to 275 carry the 'KMSKS' region motif; sequence ITSKR.

The protein belongs to the class-I aminoacyl-tRNA synthetase family. As to quaternary structure, monomer.

The protein resides in the cytoplasm. It carries out the reaction tRNA(Gln) + L-glutamine + ATP = L-glutaminyl-tRNA(Gln) + AMP + diphosphate. This chain is Glutamine--tRNA ligase, found in Neisseria gonorrhoeae (strain ATCC 700825 / FA 1090).